Reading from the N-terminus, the 235-residue chain is Large ribosomal subunit protein uL3 (235 aa).

The tract at residues 138–157 (SVSHRSHGSTGGRQDPGKTF) is disordered. Gln-151 is modified (N5-methylglutamine).

This sequence belongs to the universal ribosomal protein uL3 family. In terms of assembly, part of the 50S ribosomal subunit. Forms a cluster with proteins L14 and L19. In terms of processing, methylated by PrmB.

Its function is as follows. One of the primary rRNA binding proteins, it binds directly near the 3'-end of the 23S rRNA, where it nucleates assembly of the 50S subunit. The polypeptide is Large ribosomal subunit protein uL3 (Rhodospirillum centenum (strain ATCC 51521 / SW)).